We begin with the raw amino-acid sequence, 309 residues long: tRNA pseudouridine synthase B (309 aa).

D52 serves as the catalytic Nucleophile.

This sequence belongs to the pseudouridine synthase TruB family. Type 1 subfamily.

It catalyses the reaction uridine(55) in tRNA = pseudouridine(55) in tRNA. Responsible for synthesis of pseudouridine from uracil-55 in the psi GC loop of transfer RNAs. The polypeptide is tRNA pseudouridine synthase B (Leptospira interrogans serogroup Icterohaemorrhagiae serovar copenhageni (strain Fiocruz L1-130)).